Here is a 108-residue protein sequence, read N- to C-terminus: DNA-directed RNA polymerase III subunit RPC10 (108 aa).

Positions 5, 8, 25, 28, 69, and 72 each coordinate Zn(2+). The segment at 5 to 28 adopts a C4-type zinc-finger fold; that stretch reads CPGCGNGLIVEEGQRCHRFACNTC. The TFIIS-type zinc-finger motif lies at 65 to 107; that stretch reads TAEPCPKCEHPRAYFMQLQTRSADEPMTTFYKCCNAQCGHRWR. The Hairpin signature appears at 88-89; it reads DE. Zn(2+)-binding residues include C98 and C102.

The protein belongs to the archaeal RpoM/eukaryotic RPA12/RPB9/RPC11 RNA polymerase family. As to quaternary structure, component of the RNA polymerase III complex consisting of 17 subunits: a ten-subunit horseshoe-shaped catalytic core composed of POLR3A/RPC1, POLR3B/RPC2, POLR1C/RPAC1, POLR1D/RPAC2, POLR3K/RPC10, POLR2E/RPABC1, POLR2F/RPABC2, POLR2H/RPABC3, POLR2K/RPABC4 and POLR2L/RPABC5; a mobile stalk composed of two subunits POLR3H/RPC8 and CRCP/RPC9, protruding from the core and functioning primarily in transcription initiation; and additional subunits homologous to general transcription factors of the RNA polymerase II machinery, POLR3C/RPC3-POLR3F/RPC6-POLR3G/RPC7 heterotrimer required for transcription initiation and POLR3D/RPC4-POLR3E/RPC5 heterodimer involved in both transcription initiation and termination.

The protein resides in the nucleus. Functionally, core component of RNA polymerase III (Pol III) which synthesizes small non-coding RNAs using the four ribonucleoside triphosphates as substrates. Can mediate Pol I proofreading of the nascent RNA transcript. Anchors into the Pol III active site to constantly monitor transcription fidelity, cleaves mis-incorporated 5'-ribonucleotides and restarts the transcription process. Once Pol III reaches the poly(dT) termination signal, can induce Pol III clamp opening and transcription termination. Pol III plays an important role in sensing and limiting infection by intracellular bacteria and DNA viruses. Acts as a nuclear and cytosolic DNA sensor involved in innate immune response. Can sense non-self dsDNA that serves as template for transcription into dsRNA. The non-self RNA polymerase III transcripts, such as Epstein-Barr virus-encoded RNAs (EBERs) induce type I interferon and NF-kappa-B through the RIG-I pathway. This chain is DNA-directed RNA polymerase III subunit RPC10, found in Mus musculus (Mouse).